A 532-amino-acid chain; its full sequence is Optineurin (532 aa).

2 coiled-coil regions span residues 27-143 (SMKN…LKLG) and 195-466 (EEVA…EEMM). Residues 502 to 532 (QPSITVYTCPKCNLTVPDMDTLQIHVMDCIT) form a CCHC NOA-type zinc finger. Positions 510, 513, 526, and 530 each coordinate Zn(2+).

The protein localises to the cytoplasm. It localises to the perinuclear region. It is found in the golgi apparatus. Its subcellular location is the trans-Golgi network. The protein resides in the cytoplasmic vesicle. The protein localises to the recycling endosome. It localises to the autophagosome. Probably part of the TNF-alpha signaling pathway that can shift the equilibrium toward induction of cell death. May act by regulating membrane trafficking and cellular morphogenesis. This chain is Optineurin (optn), found in Xenopus laevis (African clawed frog).